The primary structure comprises 1342 residues: DNA-directed RNA polymerase subunit beta (1342 aa).

Belongs to the RNA polymerase beta chain family. In terms of assembly, the RNAP catalytic core consists of 2 alpha, 1 beta, 1 beta' and 1 omega subunit. When a sigma factor is associated with the core the holoenzyme is formed, which can initiate transcription.

The enzyme catalyses RNA(n) + a ribonucleoside 5'-triphosphate = RNA(n+1) + diphosphate. DNA-dependent RNA polymerase catalyzes the transcription of DNA into RNA using the four ribonucleoside triphosphates as substrates. The protein is DNA-directed RNA polymerase subunit beta of Enterobacter sp. (strain 638).